A 284-amino-acid chain; its full sequence is Diaminopimelate epimerase (284 aa).

Asparagine 20, glutamine 53, and asparagine 73 together coordinate substrate. The active-site Proton donor is the cysteine 82. Substrate is bound by residues 83–84 (GN), asparagine 167, asparagine 200, and 218–219 (ER). Cysteine 227 (proton acceptor) is an active-site residue. 228 to 229 (GS) lines the substrate pocket.

This sequence belongs to the diaminopimelate epimerase family. Homodimer.

It is found in the cytoplasm. The catalysed reaction is (2S,6S)-2,6-diaminopimelate = meso-2,6-diaminopimelate. It functions in the pathway amino-acid biosynthesis; L-lysine biosynthesis via DAP pathway; DL-2,6-diaminopimelate from LL-2,6-diaminopimelate: step 1/1. Its function is as follows. Catalyzes the stereoinversion of LL-2,6-diaminopimelate (L,L-DAP) to meso-diaminopimelate (meso-DAP), a precursor of L-lysine and an essential component of the bacterial peptidoglycan. The protein is Diaminopimelate epimerase of Xanthomonas euvesicatoria pv. vesicatoria (strain 85-10) (Xanthomonas campestris pv. vesicatoria).